A 198-amino-acid chain; its full sequence is Recombination protein RecR (198 aa).

A C4-type zinc finger spans residues 57–72; it reads CSICGNLTDQDPCAIC. Positions 80–175 constitute a Toprim domain; it reads STILIVEDSR…KVTRLARGLA (96 aa).

Belongs to the RecR family.

May play a role in DNA repair. It seems to be involved in an RecBC-independent recombinational process of DNA repair. It may act with RecF and RecO. In Streptococcus suis (strain 05ZYH33), this protein is Recombination protein RecR.